The primary structure comprises 450 residues: Probable ATP-dependent RNA helicase MG425 homolog (450 aa).

A Q motif motif is present at residues 3-31 (STFNELGVSPALIATLKDNNINQPTTIQQ). In terms of domain architecture, Helicase ATP-binding spans 34–206 (IPQFLQHQNL…KQITKNGIFL (173 aa)). ATP is bound at residue 47 to 54 (SPTGTGKT). Positions 154 to 157 (DEVD) match the DEVD box motif. In terms of domain architecture, Helicase C-terminal spans 234–384 (RKKQALYSLV…PLRPMRLRLI (151 aa)). The segment at 429-450 (MRQPERDMQKNKLHDSDWQSNM) is disordered. Over residues 430–450 (RQPERDMQKNKLHDSDWQSNM) the composition is skewed to basic and acidic residues.

This sequence belongs to the DEAD box helicase family.

The enzyme catalyses ATP + H2O = ADP + phosphate + H(+). The chain is Probable ATP-dependent RNA helicase MG425 homolog from Mycoplasma pneumoniae (strain ATCC 29342 / M129 / Subtype 1) (Mycoplasmoides pneumoniae).